We begin with the raw amino-acid sequence, 111 residues long: Prothymosin alpha (111 aa).

Residue Met-1 is modified to N-acetylmethionine. The disordered stretch occupies residues 1–111 (MSDAAVDTSS…TKKQKTEEDD (111 aa)). The residue at position 2 (Ser-2) is an N-acetylserine; in Prothymosin alpha, N-terminally processed. Residue Ser-2 is modified to Phosphoserine. Phosphothreonine is present on Thr-8. Phosphoserine is present on residues Ser-9 and Ser-10. Thr-13 and Thr-14 each carry phosphothreonine. Basic and acidic residues predominate over residues 13 to 31 (TTKDLKEKKEVVEEAENGR). Lys-15 bears the N6-acetyllysine; alternate mark. At Lys-15 the chain carries N6-succinyllysine; alternate. Residues 43 to 84 (ENGEQEADNEVDEEEEEGGEEEEEEEEGDGEEEDGDEDEEAE) are compositionally biased toward acidic residues. The segment covering 101–111 (DTKKQKTEEDD) has biased composition (basic and acidic residues). The residue at position 102 (Thr-102) is a Phosphothreonine. The residue at position 103 (Lys-103) is an N6-acetyllysine; alternate. Residue Lys-103 forms a Glycyl lysine isopeptide (Lys-Gly) (interchain with G-Cter in SUMO2); alternate linkage. Thr-107 is modified (phosphothreonine).

This sequence belongs to the pro/parathymosin family. As to quaternary structure, interacts with NUPR1; regulates apoptotic process. Covalently linked to a small RNA of about 20 nucleotides.

The protein localises to the nucleus. In terms of biological role, prothymosin alpha may mediate immune function by conferring resistance to certain opportunistic infections. This Mus musculus (Mouse) protein is Prothymosin alpha (Ptma).